The chain runs to 454 residues: MKQNNLNVKEKKFSKVAFSHVGCEKNLVDTQHMQGLLDKDGYEVESNINDANIVVVNTCSFIETAREESIRKILEYTNQGKEVIVAGCMAQHFKEELLKEIPEIKGLVGTGDYQKIAKVLDRVEKGEIVNEVSKIPEFIADEEIPRFVDKNKFVAYLRIAEGCNYNCAFCIIPKLRGPQRSRTIESIVSEAKSLAKQGIKEIILISQITTNYGKDIYGKPSLAKLLNELSKVPIPWIRIHYAYPTGLTDEVIRAFKDSKNIVPYFDLPLQHSHPDVLKSMNRPWQASLNESILEKIREEIPSAVLRTSLIVGFPGEKKEHFEHLLEFLDRHKFDHVGVFIFSPEEGTAAFDLPNKVSPEVAAARKDNVISVQQNISKDKNQSYVGSKMKILVEKISDNNELIGRSYNFAPEIDGNVILSISANNYLRNYIGKFVEANISFADEYDLYGETIKIL.

In terms of domain architecture, MTTase N-terminal spans 14–125 (SKVAFSHVGC…IAKVLDRVEK (112 aa)). Residues cysteine 23, cysteine 59, cysteine 88, cysteine 163, cysteine 167, and cysteine 170 each coordinate [4Fe-4S] cluster. In terms of domain architecture, Radical SAM core spans 149 to 378 (DKNKFVAYLR…ISVQQNISKD (230 aa)). In terms of domain architecture, TRAM spans 381-452 (QSYVGSKMKI…EYDLYGETIK (72 aa)).

Belongs to the methylthiotransferase family. RimO subfamily. Requires [4Fe-4S] cluster as cofactor.

It localises to the cytoplasm. The enzyme catalyses L-aspartate(89)-[ribosomal protein uS12]-hydrogen + (sulfur carrier)-SH + AH2 + 2 S-adenosyl-L-methionine = 3-methylsulfanyl-L-aspartate(89)-[ribosomal protein uS12]-hydrogen + (sulfur carrier)-H + 5'-deoxyadenosine + L-methionine + A + S-adenosyl-L-homocysteine + 2 H(+). Catalyzes the methylthiolation of an aspartic acid residue of ribosomal protein uS12. This is Ribosomal protein uS12 methylthiotransferase RimO from Prochlorococcus marinus (strain MIT 9312).